Reading from the N-terminus, the 302-residue chain is Probable 2-(5''-triphosphoribosyl)-3'-dephosphocoenzyme-A synthase 1 (302 aa).

It belongs to the CitG/MdcB family.

It catalyses the reaction 3'-dephospho-CoA + ATP = 2'-(5''-triphospho-alpha-D-ribosyl)-3'-dephospho-CoA + adenine. In Salmonella typhi, this protein is Probable 2-(5''-triphosphoribosyl)-3'-dephosphocoenzyme-A synthase 1.